The primary structure comprises 227 residues: Cytidylate kinase (227 aa).

Glycine 11–threonine 19 is a binding site for ATP.

It belongs to the cytidylate kinase family. Type 1 subfamily.

Its subcellular location is the cytoplasm. The catalysed reaction is CMP + ATP = CDP + ADP. It carries out the reaction dCMP + ATP = dCDP + ADP. In Pasteurella multocida (strain Pm70), this protein is Cytidylate kinase.